The sequence spans 61 residues: Metallothionein-1D (61 aa).

Residues 1 to 29 (MDPNCSCSTGGSCSCATSCTCKACRCTSC) form a beta region. A divalent metal cation contacts are provided by cysteine 5, cysteine 7, cysteine 13, cysteine 15, cysteine 19, cysteine 21, cysteine 24, cysteine 26, cysteine 29, cysteine 33, cysteine 34, cysteine 36, cysteine 37, cysteine 41, cysteine 44, cysteine 48, cysteine 50, cysteine 57, cysteine 59, and cysteine 60. The segment at 30–61 (KKSCCSCCPAGCAKCAQGCICKGASDKCSCCA) is alpha.

The protein belongs to the metallothionein superfamily. Type 1 family. As to quaternary structure, monomer.

Its function is as follows. Metallothioneins have a high content of cysteine residues that bind various heavy metals; these proteins are transcriptionally regulated by both heavy metals and glucocorticoids. The sequence is that of Metallothionein-1D (MT1D) from Sus scrofa (Pig).